The primary structure comprises 752 residues: Photosystem I P700 chlorophyll a apoprotein A1 (752 aa).

8 helical membrane passes run 73–96 (IFSA…FHGA), 159–182 (LYAT…FHYH), 198–222 (MNHH…HISI), 294–312 (TAHH…GHMY), 349–372 (WHAQ…HHMY), 388–414 (LSLF…IFMV), 436–458 (AIIS…LYIH), and 533–551 (FMVH…LILV). [4Fe-4S] cluster contacts are provided by C575 and C584. 2 helical membrane-spanning segments follow: residues 591 to 612 (HVFL…HFSW) and 666 to 688 (LSAY…MFLF). H677 is a binding site for chlorophyll a'. Residues M685 and Y693 each contribute to the chlorophyll a site. Position 694 (W694) interacts with phylloquinone. The helical transmembrane segment at 726 to 746 (AVGVAHYLLGGIGTTWAFFLA) threads the bilayer.

It belongs to the PsaA/PsaB family. In terms of assembly, the PsaA/B heterodimer binds the P700 chlorophyll special pair and subsequent electron acceptors. PSI consists of a core antenna complex that captures photons, and an electron transfer chain that converts photonic excitation into a charge separation. The eukaryotic PSI reaction center is composed of at least 11 subunits. Requires P700 is a chlorophyll a/chlorophyll a' dimer, A0 is one or more chlorophyll a, A1 is one or both phylloquinones and FX is a shared 4Fe-4S iron-sulfur center. as cofactor.

The protein localises to the plastid. Its subcellular location is the chloroplast thylakoid membrane. It catalyses the reaction reduced [plastocyanin] + hnu + oxidized [2Fe-2S]-[ferredoxin] = oxidized [plastocyanin] + reduced [2Fe-2S]-[ferredoxin]. PsaA and PsaB bind P700, the primary electron donor of photosystem I (PSI), as well as the electron acceptors A0, A1 and FX. PSI is a plastocyanin/cytochrome c6-ferredoxin oxidoreductase, converting photonic excitation into a charge separation, which transfers an electron from the donor P700 chlorophyll pair to the spectroscopically characterized acceptors A0, A1, FX, FA and FB in turn. Oxidized P700 is reduced on the lumenal side of the thylakoid membrane by plastocyanin or cytochrome c6. This chain is Photosystem I P700 chlorophyll a apoprotein A1, found in Gracilaria tenuistipitata var. liui (Red alga).